The sequence spans 495 residues: MPTPNTASPQAKGFRRAVSELDAKQAEAIMSPRFIGRRQSLIEDARKEREKAEAASAASSEPGDLLEAAVSKEKDGKAMLNLLFTLRGAKTSSLSRAVKAFETFEAQIHHLETRPVQRPRAGGPHLEYFVRCEVPSADLPALLSSVRRVAEDVRGAGENKVLWFPRKVSELDKCHHLVTKFDPDLDLDHPGFSDQVYRQRRKLIAEIAFQYKHGDPIPRVEYTAEEIATWKEVYTTLKSLYVTHACREHLEAFQLLERFSGYREDSIPQLEDVSRFLKERTGFQLRPVAGLLSARDFLASLAFRVFQCTQYIRHASSPMHSPEPDCCHELLGHVPMLADRTFAQFSQDIGLASLGASDEEIEKLSTLYWFTVEFGLCKQNGEVKAYGAGLLSSYGELLHSLSEEPEIRAFDPDAAAVQPYQDQTYQSVYFVSESFSDAKDKLRNYASRIQRPFSVKFDPYTLAIDVLDSPHAIRRSLEGVQDELHTLAHALSAIG.

A Phosphoserine; by CaMK2 modification is found at S19. Phosphoserine is present on S31. S40 carries the phosphoserine; by CaMK2 and PKA modification. Positions 41-53 (LIEDARKEREKAE) are enriched in basic and acidic residues. The interval 41–65 (LIEDARKEREKAEAASAASSEPGDL) is disordered. Positions 328, 333, and 373 each coordinate Fe cation. Position 469 is a phosphoserine (S469).

This sequence belongs to the biopterin-dependent aromatic amino acid hydroxylase family. Homotetramer. Interacts (when phosphorylated at Ser-19) with YWHAG; one YWHAG dimer bounds to one TH tetramer this interaction may influence the phosphorylation and dephosphorylation of other sites. Fe(2+) is required as a cofactor. Post-translationally, phosphorylated on Ser-19, Ser-31 and Ser-40 by several protein kinases with different site specificities. Phosphorylation at Ser-31 and Ser-40 leads to an increase of TH activity. Phosphorylation at Ser-40 activates the enzyme and also counteracts the feedback inhibition of TH by catecholamines. Phosphorylation of Ser-19 and Ser-31 triggers the proteasomal degradation of TH through the ubiquitin-proteasome pathway. Phosphorylation at Ser-31 facilitates transport of TH from the soma to the nerve terminals via the microtubule network. Phosphorylation at Ser-19 induces the high-affinity binding to the 14-3-3 protein YWHAG; this interaction may influence the phosphorylation and dephosphorylation of other sites. Ser-19 increases the phosphorylation at Ser-40 in a hierarchical manner, leading to increased activity.

It localises to the cytoplasm. It is found in the perinuclear region. The protein resides in the nucleus. Its subcellular location is the cell projection. The protein localises to the axon. It localises to the cytoplasmic vesicle. It is found in the secretory vesicle. The protein resides in the synaptic vesicle. The catalysed reaction is (6R)-L-erythro-5,6,7,8-tetrahydrobiopterin + L-tyrosine + O2 = (4aS,6R)-4a-hydroxy-L-erythro-5,6,7,8-tetrahydrobiopterin + L-dopa. It participates in catecholamine biosynthesis; dopamine biosynthesis; dopamine from L-tyrosine: step 1/2. Inhibited in feedback fashion by the catecholamine neurotransmitters, especially by dopamine in competition with tetrahydrobiopterin. Phosphorylation of several Ser/Thr residues in the N-terminus regulates the catalytic activity. Ser-31 and Ser-40 are readily phosphorylated to activate the catalytic activity. A Cysteine modification induced by N-ethylmaleimide (NEM), inhibits tyrosine 3-monooxygenase activity through the modification of the Cys-174. Catalyzes the conversion of L-tyrosine to L-dihydroxyphenylalanine (L-Dopa), the rate-limiting step in the biosynthesis of cathecolamines, dopamine, noradrenaline, and adrenaline. Uses tetrahydrobiopterin and molecular oxygen to convert tyrosine to L-Dopa. In addition to tyrosine, is able to catalyze the hydroxylation of phenylalanine and tryptophan with lower specificity. Positively regulates the regression of retinal hyaloid vessels during postnatal development. This Canis lupus familiaris (Dog) protein is Tyrosine 3-monooxygenase (TH).